A 225-amino-acid chain; its full sequence is MRVRRLVMLRHGQTEYNAGSRMQGQLDTDLSDLGREQAVAAAEVLAKRQPLLIVSSDLRRALDTAVALGDRSGQPVSIDTRLRETHLGDWQGMTHLEVDAAAPGARLAWRDDARWAPHGGESRVDVADRSLPLVHELVTQQTDWGAAGSDRPVVLVAHGGLIAALTAALLGLPVDNWPVLGGMGNASWVQLAGHTRADGDPGAFADIRWRLDVWNASAQVANDVL.

A substrate-binding site is contributed by Arg-10. The active-site Tele-phosphohistidine intermediate is His-11. A substrate-binding site is contributed by Arg-60. Glu-84 functions as the Proton donor/acceptor in the catalytic mechanism. His-158 is a substrate binding site.

The protein belongs to the phosphoglycerate mutase family. In terms of assembly, homodimer.

The catalysed reaction is (2R)-2-O-(alpha-D-glucopyranosyl)-3-phospho-glycerate + H2O = (2R)-2-O-(alpha-D-glucopyranosyl)-glycerate + phosphate. Its function is as follows. Involved in the biosynthesis of mycobacterial methylglucose lipopolysaccharides (MGLP). Catalyzes the dephosphorylation of glucosyl-3-phosphoglycerate (GPG) to glucosylglycerate. This Mycolicibacterium vanbaalenii (strain DSM 7251 / JCM 13017 / BCRC 16820 / KCTC 9966 / NRRL B-24157 / PYR-1) (Mycobacterium vanbaalenii) protein is Glucosyl-3-phosphoglycerate phosphatase.